A 151-amino-acid polypeptide reads, in one-letter code: Small ribosomal subunit protein uS13 (151 aa).

It belongs to the universal ribosomal protein uS13 family. In terms of assembly, part of the 30S ribosomal subunit. Forms a loose heterodimer with protein S19. Forms two bridges to the 50S subunit in the 70S ribosome.

Its function is as follows. Located at the top of the head of the 30S subunit, it contacts several helices of the 16S rRNA. In the 70S ribosome it contacts the 23S rRNA (bridge B1a) and protein L5 of the 50S subunit (bridge B1b), connecting the 2 subunits; these bridges are implicated in subunit movement. The polypeptide is Small ribosomal subunit protein uS13 (Methanospirillum hungatei JF-1 (strain ATCC 27890 / DSM 864 / NBRC 100397 / JF-1)).